Here is a 664-residue protein sequence, read N- to C-terminus: Zinc finger protein 710 (664 aa).

Residues K110 and K113 each participate in a glycyl lysine isopeptide (Lys-Gly) (interchain with G-Cter in SUMO2) cross-link. The segment at 121–141 (VYEVSVPGDDKDAGPAEAPAE) is disordered. 3 C2H2-type zinc fingers span residues 295–317 (WQCR…ILGH), 323–345 (HSCP…LLTH), and 351–373 (HKCQ…MLLH). K377 participates in a covalent cross-link: Glycyl lysine isopeptide (Lys-Gly) (interchain with G-Cter in SUMO2). 8 consecutive C2H2-type zinc fingers follow at residues 379–401 (YSCH…EVKH), 407–429 (HVCV…LASH), 435–457 (YQCL…MLKH), 463–485 (FVCT…SLTH), 491–513 (FKCE…MLIH), 519–541 (YQCH…MIVH), 547–569 (FKCK…MHLH), and 575–598 (FKCP…KVKH).

This sequence belongs to the krueppel C2H2-type zinc-finger protein family.

It is found in the nucleus. May be involved in transcriptional regulation. This chain is Zinc finger protein 710 (ZNF710), found in Homo sapiens (Human).